A 459-amino-acid chain; its full sequence is Bifunctional protein GlmU (459 aa).

The segment at Met1–Arg230 is pyrophosphorylase. UDP-N-acetyl-alpha-D-glucosamine-binding positions include Leu9–Gly12, Lys23, Gln73, Gly78–Thr79, Ser101–Asp103, Gly140, Glu155, Asn170, and Asn228. Asp103 is a Mg(2+) binding site. A Mg(2+)-binding site is contributed by Asn228. The segment at Val231–Asp251 is linker. The interval Gly252 to Asp459 is N-acetyltransferase. UDP-N-acetyl-alpha-D-glucosamine is bound by residues Arg333 and Lys351. The Proton acceptor role is filled by His363. Positions 366 and 377 each coordinate UDP-N-acetyl-alpha-D-glucosamine. Residues Asn386–Tyr387, Ser405, Ala423, and Arg440 contribute to the acetyl-CoA site.

The protein in the N-terminal section; belongs to the N-acetylglucosamine-1-phosphate uridyltransferase family. In the C-terminal section; belongs to the transferase hexapeptide repeat family. Homotrimer. It depends on Mg(2+) as a cofactor.

It localises to the cytoplasm. The enzyme catalyses alpha-D-glucosamine 1-phosphate + acetyl-CoA = N-acetyl-alpha-D-glucosamine 1-phosphate + CoA + H(+). It carries out the reaction N-acetyl-alpha-D-glucosamine 1-phosphate + UTP + H(+) = UDP-N-acetyl-alpha-D-glucosamine + diphosphate. The protein operates within nucleotide-sugar biosynthesis; UDP-N-acetyl-alpha-D-glucosamine biosynthesis; N-acetyl-alpha-D-glucosamine 1-phosphate from alpha-D-glucosamine 6-phosphate (route II): step 2/2. It functions in the pathway nucleotide-sugar biosynthesis; UDP-N-acetyl-alpha-D-glucosamine biosynthesis; UDP-N-acetyl-alpha-D-glucosamine from N-acetyl-alpha-D-glucosamine 1-phosphate: step 1/1. Its pathway is bacterial outer membrane biogenesis; LPS lipid A biosynthesis. Catalyzes the last two sequential reactions in the de novo biosynthetic pathway for UDP-N-acetylglucosamine (UDP-GlcNAc). The C-terminal domain catalyzes the transfer of acetyl group from acetyl coenzyme A to glucosamine-1-phosphate (GlcN-1-P) to produce N-acetylglucosamine-1-phosphate (GlcNAc-1-P), which is converted into UDP-GlcNAc by the transfer of uridine 5-monophosphate (from uridine 5-triphosphate), a reaction catalyzed by the N-terminal domain. The chain is Bifunctional protein GlmU from Levilactobacillus brevis (strain ATCC 367 / BCRC 12310 / CIP 105137 / JCM 1170 / LMG 11437 / NCIMB 947 / NCTC 947) (Lactobacillus brevis).